The chain runs to 206 residues: Ribosome maturation factor RimM (206 aa).

The PRC barrel domain occupies 113-206 (DDEYYWVDLI…RIDSNWPTEL (94 aa)).

This sequence belongs to the RimM family. In terms of assembly, binds ribosomal protein uS19.

The protein localises to the cytoplasm. Functionally, an accessory protein needed during the final step in the assembly of 30S ribosomal subunit, possibly for assembly of the head region. Essential for efficient processing of 16S rRNA. May be needed both before and after RbfA during the maturation of 16S rRNA. It has affinity for free ribosomal 30S subunits but not for 70S ribosomes. The sequence is that of Ribosome maturation factor RimM from Bordetella petrii (strain ATCC BAA-461 / DSM 12804 / CCUG 43448).